The following is a 657-amino-acid chain: Folic acid synthesis protein FOL1 (657 aa).

The DHNA stretch occupies residues 1–116; sequence MDKIIIKDLL…WPGVQIERTL (116 aa). The tract at residues 149–274 is HPPK; sequence YLAFGSNLGD…FVLLPLSDIA (126 aa). In terms of domain architecture, Pterin-binding spans 333-641; sequence TFIMGILNVT…DIPEIRDAML (309 aa). The tract at residues 335-657 is DHPS; sequence IMGILNVTPD…KPQRRYQIQK (323 aa). Residue Asn340 participates in Mg(2+) binding. (7,8-dihydropterin-6-yl)methyl diphosphate-binding residues include Thr380, Asp416, and Asn435. The segment at 466 to 524 is disordered; that stretch reads LNNSNDSNSNSSINTNGEDNNNNNNNNNNNNNNNNNNNNNNNNNDDNDNDNRSKIKQKI. Residues 467 to 509 show a composition bias toward low complexity; the sequence is NNSNDSNSNSSINTNGEDNNNNNNNNNNNNNNNNNNNNNNNNN. The span at 514–524 shows a compositional bias: basic and acidic residues; sequence NDNRSKIKQKI. (7,8-dihydropterin-6-yl)methyl diphosphate-binding positions include Asp547, Lys583, and 629–631; that span reads RIH.

The protein in the N-terminal section; belongs to the DHNA family. This sequence in the central section; belongs to the HPPK family. It in the C-terminal section; belongs to the DHPS family. Requires Mg(2+) as cofactor.

It catalyses the reaction 7,8-dihydroneopterin = 6-hydroxymethyl-7,8-dihydropterin + glycolaldehyde. The enzyme catalyses 6-hydroxymethyl-7,8-dihydropterin + ATP = (7,8-dihydropterin-6-yl)methyl diphosphate + AMP + H(+). The catalysed reaction is (7,8-dihydropterin-6-yl)methyl diphosphate + 4-aminobenzoate = 7,8-dihydropteroate + diphosphate. The protein operates within cofactor biosynthesis; tetrahydrofolate biosynthesis; 2-amino-4-hydroxy-6-hydroxymethyl-7,8-dihydropteridine diphosphate from 7,8-dihydroneopterin triphosphate: step 3/4. Its pathway is cofactor biosynthesis; tetrahydrofolate biosynthesis; 2-amino-4-hydroxy-6-hydroxymethyl-7,8-dihydropteridine diphosphate from 7,8-dihydroneopterin triphosphate: step 4/4. It functions in the pathway cofactor biosynthesis; tetrahydrofolate biosynthesis; 7,8-dihydrofolate from 2-amino-4-hydroxy-6-hydroxymethyl-7,8-dihydropteridine diphosphate and 4-aminobenzoate: step 1/2. Functionally, catalyzes three sequential steps of tetrahydrofolate biosynthesis. The sequence is that of Folic acid synthesis protein FOL1 (fol1) from Dictyostelium discoideum (Social amoeba).